A 682-amino-acid chain; its full sequence is MGALTSRQHAGVEEVDIPSNSVYRYPPKSGSYFASHFIMGGEKFDCTHPEGYLFGENSDLNFLGNRPVSFPYAAPPPHEPVKTLRSLINIRKDTLRLVKCAEEVKSHGEEAGKAKVHYNVEFTFDTDARVAITIYYQATEEFQNGIASYIPKDNSLQSETVHYKRGVCQQFCLPSHTVDPSEWAEEELGFDLDREVYPLVVHAVVDEGDEYFGHCHVLLGTFEKHSDGTFCVKPLKQKQVWDGVTYLLQEDYGIENKSNTQDFKVAEDDVRDNSAECVVCLSDVRDTLILPCRHCASCNVHCADTLRYQANNCPICRLPFRALLQIRAMRKKLGPLSPSSFNPIISSQTSDSEEHSSSENIPAGYEVVSLLEALNGPLTSSPAVPPLHVLGDGHLSGMLPSYGSDGHLPPVRTLSPLDHLSDCNSQGLKLNKSLSKSISQNSSVLHEEEDERSCSESDTQLSQRLSAQHPEEGPDVTPESENLTLSSSGAVDQSSCTGTPLSSTISSPEDPASSSLAQSVMSMASSQISTDTVSSMSGSYIAPGTEEEGEAPPSPRAASRAPSEEEETPAESPDSNFAGLPAGEQDAEGNDIMEEEDRSPVQEDGQRTCAFLGMECDNNNDFDVASVKALDNKLCSEVCLPGTWQHDAAIINRHNTQRRRLSPSSLEDPEEDRPCVWDPLAV.

Gly2 is lipidated: N-myristoyl glycine. An RING-type; degenerate zinc finger spans residues 277 to 317 (CVVCLSDVRDTLILPCRHCASCNVHCADTLRYQANNCPICR). The short motif at 330–333 (RKKL) is the D-box 1 element. Disordered regions lie at residues 440–604 (QNSS…VQED) and 655–682 (NTQR…PLAV). Residues 479-538 (ESENLTLSSSGAVDQSSCTGTPLSSTISSPEDPASSSLAQSVMSMASSQISTDTVSSMSG) are compositionally biased toward polar residues. The segment covering 585–597 (QDAEGNDIMEEED) has biased composition (acidic residues). The D-box 2 signature appears at 658-661 (RRRL). A phosphoserine mark is found at Ser662, Ser664, and Ser665.

As to quaternary structure, interacts with APBB1. Interacts with CHD1; CHD1-binding controls RNF157 stability. Also interacts with ATRN, MEGF8, TECR, MSI2, PLRG1, BYSL, MTERF3, PSMA1, MRPS18B, PRPF4, FASTKD2, SLC25A1, SMU1, CNOT9, MRPS2, MAGT1, FXR2, EMD, PSMD8, HDAC1, RAN, HSD17B12, TXNDC5 and MRPL19. In terms of tissue distribution, predominantly expressed in the brain.

The protein resides in the cytoplasm. It carries out the reaction S-ubiquitinyl-[E2 ubiquitin-conjugating enzyme]-L-cysteine + [acceptor protein]-L-lysine = [E2 ubiquitin-conjugating enzyme]-L-cysteine + N(6)-ubiquitinyl-[acceptor protein]-L-lysine.. Its function is as follows. E3 ubiquitin ligase that ubiquitinates APBB1 for its degradation by the proteasome and thus prevents apoptosis and promotes survival of neurons. Has a dual role in neurons as it is also required for dendrite growth and maintenance for which its ligase activity is not critical. May act as a scaffold molecule to regulate this process. Acts as a downstream effector of the interconnected PI3K and MAPK signaling pathways and thus participates in the regulation of the cell cycle. This is E3 ubiquitin ligase Rnf157 (Rnf157) from Rattus norvegicus (Rat).